We begin with the raw amino-acid sequence, 459 residues long: Putrescine aminotransferase (459 aa).

Pyridoxal 5'-phosphate-binding positions include 150-151 (GT) and glutamine 274. At lysine 300 the chain carries N6-(pyridoxal phosphate)lysine. A pyridoxal 5'-phosphate-binding site is contributed by threonine 332.

It belongs to the class-III pyridoxal-phosphate-dependent aminotransferase family. Putrescine aminotransferase subfamily. The cofactor is pyridoxal 5'-phosphate.

The catalysed reaction is an alkane-alpha,omega-diamine + 2-oxoglutarate = an omega-aminoaldehyde + L-glutamate. The enzyme catalyses putrescine + 2-oxoglutarate = 1-pyrroline + L-glutamate + H2O. It carries out the reaction cadaverine + 2-oxoglutarate = 5-aminopentanal + L-glutamate. It functions in the pathway amine and polyamine degradation; putrescine degradation; 4-aminobutanal from putrescine (transaminase route): step 1/1. Its function is as follows. Catalyzes the aminotransferase reaction from putrescine to 2-oxoglutarate, leading to glutamate and 4-aminobutanal, which spontaneously cyclizes to form 1-pyrroline. This is the first step in one of two pathways for putrescine degradation, where putrescine is converted into 4-aminobutanoate (gamma-aminobutyrate or GABA) via 4-aminobutanal. Also functions as a cadaverine transaminase in a a L-lysine degradation pathway to succinate that proceeds via cadaverine, glutarate and L-2-hydroxyglutarate. The polypeptide is Putrescine aminotransferase (Salmonella choleraesuis (strain SC-B67)).